A 590-amino-acid chain; its full sequence is Pre-mRNA-splicing factor CEF1 (590 aa).

2 HTH myb-type domains span residues 1–60 and 63–110; these read MPPV…NPKL and TEFS…ESED. 2 consecutive DNA-binding regions (H-T-H motif) follow at residues 33-56 and 84-106; these read WSKV…NEYL and WRTI…NRLL. 3 stretches are compositionally biased toward basic and acidic residues: residues 244–263, 271–281, and 337–351; these read FERK…PSKK, HDENEHVEKAA, and LLPH…ERSN. Disordered stretches follow at residues 244–286 and 336–355; these read FERK…GEST and ELLP…IKSG. The tract at residues 460 to 490 is interaction with PRP19 and self-interaction; sequence ANAINKEPHMVPEDTVDFLKEVESRMQHITQ.

It belongs to the CEF1 family. In terms of assembly, belongs to the NTC complex (or PRP19-associated complex), composed of at least CEF1, CLF1, ISY1, NTC20, SNT309, SYF1, SYF2, and PRP19. The NTC complex associates with the spliceosome after the release of the U1 and U4 snRNAs and forms the CWC spliceosome subcomplex (or CEF1-associated complex) reminiscent of a late-stage spliceosome composed also of the U2, U5 and U6 snRNAs and at least BUD13, BUD31, BRR2, CDC40, CUS1, CWC2, CWC15, CWC21, CWC22, CWC23, CWC24, CWC25, CWC27, ECM2, HSH155, IST3, LEA1, MSL1, PRP8, PRP9, PRP11, PRP21, PRP22, PRP45, PRP46, SLU7, SMB1, SMD1, SMD2, SMD3, SMX2, SMX3, SNU114, SPP2, RSE1 and YJU2. Interacts with CLF1, ISY1, NTC20, PRP19, PRP46, SYF1 and SYF2.

The protein resides in the cytoplasm. It localises to the nucleus. In terms of biological role, involved in pre-mRNA splicing and cell cycle control. Required for the binding of the NTC complex (or PRP19-associated complex) components to the spliceosome to mediate conformational rearrangement or to stabilize the structure of the spliceosome after U4 snRNA dissociation, which leads to spliceosome maturation. Its absence leads to an arrest of the cell cycle, possibly due to the inefficient splicing of TUB1. The protein is Pre-mRNA-splicing factor CEF1 (CEF1) of Saccharomyces cerevisiae (strain ATCC 204508 / S288c) (Baker's yeast).